Here is a 131-residue protein sequence, read N- to C-terminus: MALICELDEQWSFVGSKARQHWLWYAYNTKTGGVLAYTFGPRTDETCRELLALLTPFNIGMLTSDDWGSYGREVPKDKHLTGKIFTQRIERNNLTLRTRIKRLARKTICFSRSVEIHEKVIGTFIEKHMFY.

It belongs to the transposase 27 family.

In terms of biological role, absolutely required for transposition of IS1. This chain is Insertion element iso-IS1n protein InsB (insB), found in Shigella dysenteriae.